A 313-amino-acid chain; its full sequence is Ribosomal RNA small subunit methyltransferase H (313 aa).

S-adenosyl-L-methionine-binding positions include glycine 35–histidine 37, aspartate 55, phenylalanine 80, aspartate 102, and glutamine 109.

It belongs to the methyltransferase superfamily. RsmH family.

The protein localises to the cytoplasm. It catalyses the reaction cytidine(1402) in 16S rRNA + S-adenosyl-L-methionine = N(4)-methylcytidine(1402) in 16S rRNA + S-adenosyl-L-homocysteine + H(+). In terms of biological role, specifically methylates the N4 position of cytidine in position 1402 (C1402) of 16S rRNA. The polypeptide is Ribosomal RNA small subunit methyltransferase H (Shewanella sp. (strain MR-4)).